We begin with the raw amino-acid sequence, 379 residues long: Leukocyte elastase inhibitor (379 aa).

Methionine 1 carries the N-acetylmethionine modification. An N6-acetyllysine mark is found at lysine 137 and lysine 177. The interval 351–379 is CARD-binding motif (CBM); it reads NFNADHPFIFFIRHNPSANILFLGRFSSP.

The protein belongs to the serpin family. Ov-serpin subfamily. As to quaternary structure, monomer. Interacts (via C-terminus) with CASP1; CASP4 (via CARD domain) and CASP5; these interactions regulate the activity of inflammatory caspases. Interacts with PRTN3. Interacts with GZMH. Interacts with TMSB4. Post-translationally, the N-terminus is blocked.

Its subcellular location is the secreted. The protein resides in the cytoplasm. It localises to the cytolytic granule. It is found in the early endosome. Neutrophil serine protease inhibitor that plays an essential role in the regulation of the innate immune response, inflammation and cellular homeostasis. Acts primarily to protect the cell from proteases released in the cytoplasm during stress or infection. These proteases are important in killing microbes but when released from granules, these potent enzymes also destroy host proteins and contribute to mortality. Regulates the activity of the neutrophil proteases elastase, cathepsin G, proteinase-3, chymase, chymotrypsin, and kallikrein-3. Also acts as a potent intracellular inhibitor of GZMH by directly blocking its proteolytic activity. During inflammation, limits the activity of inflammatory caspases CASP1, CASP4 and CASP5 by suppressing their caspase-recruitment domain (CARD) oligomerization and enzymatic activation. When secreted, promotes the proliferation of beta-cells via its protease inhibitory function. This Equus caballus (Horse) protein is Leukocyte elastase inhibitor (SERPINB1).